We begin with the raw amino-acid sequence, 111 residues long: Large ribosomal subunit protein uL22 (111 aa).

Belongs to the universal ribosomal protein uL22 family. Part of the 50S ribosomal subunit.

Functionally, this protein binds specifically to 23S rRNA; its binding is stimulated by other ribosomal proteins, e.g. L4, L17, and L20. It is important during the early stages of 50S assembly. It makes multiple contacts with different domains of the 23S rRNA in the assembled 50S subunit and ribosome. The globular domain of the protein is located near the polypeptide exit tunnel on the outside of the subunit, while an extended beta-hairpin is found that lines the wall of the exit tunnel in the center of the 70S ribosome. The chain is Large ribosomal subunit protein uL22 from Acholeplasma laidlawii.